Reading from the N-terminus, the 178-residue chain is Interleukin-10 (178 aa).

Positions 1 to 18 are cleaved as a signal peptide; the sequence is MPNPVLLYCLVLLAGMGT. 2 disulfides stabilise this stretch: C30–C126 and C80–C132. N134 carries an N-linked (GlcNAc...) asparagine glycan.

This sequence belongs to the IL-10 family. Homodimer. Interacts with IL10RA and IL10RB.

It is found in the secreted. Major immune regulatory cytokine that acts on many cells of the immune system where it has profound anti-inflammatory functions, limiting excessive tissue disruption caused by inflammation. Mechanistically, IL10 binds to its heterotetrameric receptor comprising IL10RA and IL10RB leading to JAK1 and STAT2-mediated phosphorylation of STAT3. In turn, STAT3 translocates to the nucleus where it drives expression of anti-inflammatory mediators. Targets antigen-presenting cells (APCs) such as macrophages and monocytes and inhibits their release of pro-inflammatory cytokines including granulocyte-macrophage colony-stimulating factor /GM-CSF, granulocyte colony-stimulating factor/G-CSF, IL-1 alpha, IL-1 beta, IL-6, IL-8 and TNF-alpha. Also interferes with antigen presentation by reducing the expression of MHC-class II and co-stimulatory molecules, thereby inhibiting their ability to induce T cell activation. In addition, controls the inflammatory response of macrophages by reprogramming essential metabolic pathways including mTOR signaling. In Marmota monax (Woodchuck), this protein is Interleukin-10 (IL10).